Here is a 66-residue protein sequence, read N- to C-terminus: Large ribosomal subunit protein bL33c (66 aa).

This sequence belongs to the bacterial ribosomal protein bL33 family.

It is found in the plastid. The protein localises to the chloroplast. In Liriodendron tulipifera (Tuliptree), this protein is Large ribosomal subunit protein bL33c.